The following is a 580-amino-acid chain: Type 3 secretion system translocon protein SctE (580 aa).

IpgC chaperone binding domain regions lie at residues 15–45 (KILTSTELGDNTIQAANDAANKLFSLTIADL) and 51–72 (INTTNAHSTSNILIPELKAPKS). A mediates interaction with human MAD2L2 region spans residues 61 to 70 (NILIPELKAP). Positions 104 to 224 (AWKSQQQARQ…MQLEKEIDSF (121 aa)) form a coiled coil. 2 consecutive transmembrane segments (helical) span residues 313-333 (ILGALLTIVSVVAAAFSGGAS) and 399-419 (IGSILGAIAGALVLVAAVVLV).

The protein belongs to the SctE/SipB/YopB family. As to quaternary structure, the core secretion machinery of the T3SS is composed of approximately 20 different proteins, including cytoplasmic components, a base, an export apparatus and a needle. This subunit is involved in the formation of a pore, called the translocon, in host membrane. Interacts with IpaC/SctB. Interacts with the needle tip protein IpaD/SctA. Interacts with the molecular chaperone IpgC, which prevents premature association with IpaC/SctB within the cytoplasm of Shigella cells and protects IpaB/SctE from proteolysis. Interacts with the host protein ICE in the cytoplasm of infected macrophages. Interacts with human MAD2L2 in the G2/M phase of the cell cycle.

It is found in the secreted. The protein localises to the host membrane. The protein resides in the host cell. Its subcellular location is the host nucleus. Its activity is regulated as follows. Interaction with the membrane is affected by the pH. IpaB/SctE is more efficient in destabilizing the membrane at pH 5.0 than at neutral pH. In terms of biological role, component of the type III secretion system (T3SS), also called injectisome, which is used to inject bacterial effector proteins into eukaryotic host cells. IpaB/SctE and IpaC/SctB are inserted into the host membrane where they form a pore and allow the translocation of effector proteins into the cytosol of target cells. Interaction with IpaD/SctA at needle tips leads to the formation of the MxiH/SctF-IpaD/SctA-IpaB/SctE ternary complex, which is essential for host cell sensing. Interaction of IpaB/SctE with host membrane lipids promotes recruitment of IpaC/SctB at the needle tip concomitant with translocon insertion into the host membrane and type III secretion induction. Its function is as follows. Required for efficient dissemination. Necessary for lysis of the two cellular membranes that surround bacteria in protrusions during cell-to-cell spread. Is sufficient to induce macrophage apoptosis through activation of the interleukin-1 beta converting enzyme (ICE) in infected macrophages. In epithelial cells, causes cell-cycle arrest by targeting host MAD2L2, an anaphase-promoting complex/cyclosome (APC) inhibitor. In Shigella flexneri, this protein is Type 3 secretion system translocon protein SctE.